A 256-amino-acid chain; its full sequence is ATP synthase peripheral stalk subunit b, mitochondrial (256 aa).

The transit peptide at 1 to 42 directs the protein to the mitochondrion; it reads MLSRVVLSAAATAAPCLKNAAALGPGVLQATRAFHTGQPRLA. N6-succinyllysine is present on K131. An N6-acetyllysine mark is found at K139, K154, K162, K221, K225, K233, and K244.

The protein belongs to the eukaryotic ATPase B chain family. In terms of assembly, component of the ATP synthase complex composed at least of ATP5F1A/subunit alpha, ATP5F1B/subunit beta, ATP5MC1/subunit c (homooctomer), MT-ATP6/subunit a, MT-ATP8/subunit 8, ATP5ME/subunit e, ATP5MF/subunit f, ATP5MG/subunit g, ATP5MK/subunit k, ATP5MJ/subunit j, ATP5F1C/subunit gamma, ATP5F1D/subunit delta, ATP5F1E/subunit epsilon, ATP5PF/subunit F6, ATP5PB/subunit b, ATP5PD/subunit d, ATP5PO/subunit OSCP. ATP synthase complex consists of a soluble F(1) head domain (subunits alpha(3) and beta(3)) - the catalytic core - and a membrane F(0) domain - the membrane proton channel (subunits c, a, 8, e, f, g, k and j). These two domains are linked by a central stalk (subunits gamma, delta, and epsilon) rotating inside the F1 region and a stationary peripheral stalk (subunits F6, b, d, and OSCP).

Its subcellular location is the mitochondrion. It is found in the mitochondrion inner membrane. Its function is as follows. Subunit b, of the mitochondrial membrane ATP synthase complex (F(1)F(0) ATP synthase or Complex V) that produces ATP from ADP in the presence of a proton gradient across the membrane which is generated by electron transport complexes of the respiratory chain. ATP synthase complex consist of a soluble F(1) head domain - the catalytic core - and a membrane F(1) domain - the membrane proton channel. These two domains are linked by a central stalk rotating inside the F(1) region and a stationary peripheral stalk. During catalysis, ATP synthesis in the catalytic domain of F(1) is coupled via a rotary mechanism of the central stalk subunits to proton translocation. In vivo, can only synthesize ATP although its ATP hydrolase activity can be activated artificially in vitro. Part of the complex F(0) domain. Part of the complex F(0) domain and the peripheric stalk, which acts as a stator to hold the catalytic alpha(3)beta(3) subcomplex and subunit a/ATP6 static relative to the rotary elements. This chain is ATP synthase peripheral stalk subunit b, mitochondrial, found in Mus musculus (Mouse).